We begin with the raw amino-acid sequence, 526 residues long: Tyrosine 2,3-aminomutase (526 aa).

Y41 functions as the Proton donor/acceptor in the catalytic mechanism. Position 71 (H71) interacts with substrate. A cross-link (5-imidazolinone (Ala-Gly)) is located at residues 130 to 132 (ASG). A 2,3-didehydroalanine (Ser) modification is found at S131. Positions 183 and 288 each coordinate substrate.

The protein belongs to the TAL/TAM family. Homotetramer; dimer of dimers. Contains an active site 4-methylidene-imidazol-5-one (MIO), which is formed autocatalytically by cyclization and dehydration of residues Ala-Ser-Gly.

The enzyme catalyses L-tyrosine = 3-amino-3-(4-hydroxyphenyl)propanoate. It catalyses the reaction L-tyrosine = (E)-4-coumarate + NH4(+). Has aminomutase and, to a much lesser extent, ammonia-lyase activity. Primarily, catalyzes the rearrangement of L-tyrosine to S-beta-tyrosine, which is probably incorporated into secondary metabolite myxovalargin. The aminomutase activity exclusively produces S-beta-tyrosine. The chain is Tyrosine 2,3-aminomutase from Myxococcus fulvus.